The chain runs to 172 residues: Translation initiation factor IF-3 (172 aa).

This sequence belongs to the IF-3 family. As to quaternary structure, monomer.

It is found in the cytoplasm. IF-3 binds to the 30S ribosomal subunit and shifts the equilibrium between 70S ribosomes and their 50S and 30S subunits in favor of the free subunits, thus enhancing the availability of 30S subunits on which protein synthesis initiation begins. The polypeptide is Translation initiation factor IF-3 (Oceanobacillus iheyensis (strain DSM 14371 / CIP 107618 / JCM 11309 / KCTC 3954 / HTE831)).